A 373-amino-acid chain; its full sequence is MESFAVAAAQLGPHFAPLSNGSVVDKVTPDMAHLISPYWNQFPAMDPIWAKILTAYMIMIGMISWCGNGVVIYIFATTKSLRTPANLLVINLAISDFGIMITNTPMMGINLYFETWVLGPMMCDIYAGLGSAFGCSSIWSMCMISLDRYQVIVKGMAGRPMTIPLALGKIAYIWFMSSIWCLAPAFGWSRYVPEGNLTSCGIDYLERDWNPRSYLIFYSIFVYYIPLFLICYSYWFIIAAVSAHEKAMREQAKKMNVKSLRSSEDAEKSAEGKLAKVALVTITLWFMAWTPYLVINCMGLFKFEGLTPLNTIWGACFAKSAACYNPIVYGISHPKYRLALKEKCPCCVFGKVDDGKSSDAQSQATASEAESKA.

At 1–49 the chain is on the extracellular side; that stretch reads MESFAVAAAQLGPHFAPLSNGSVVDKVTPDMAHLISPYWNQFPAMDPIW. An N-linked (GlcNAc...) asparagine glycan is attached at Asn-20. A helical transmembrane segment spans residues 50–74; that stretch reads AKILTAYMIMIGMISWCGNGVVIYI. Over 75 to 86 the chain is Cytoplasmic; the sequence is FATTKSLRTPAN. Residues 87-112 traverse the membrane as a helical segment; sequence LLVINLAISDFGIMITNTPMMGINLY. The Extracellular portion of the chain corresponds to 113 to 126; the sequence is FETWVLGPMMCDIY. A disulfide bond links Cys-123 and Cys-200. Residues 127–146 traverse the membrane as a helical segment; it reads AGLGSAFGCSSIWSMCMISL. The Cytoplasmic segment spans residues 147 to 165; it reads DRYQVIVKGMAGRPMTIPL. Residues 166-189 traverse the membrane as a helical segment; it reads ALGKIAYIWFMSSIWCLAPAFGWS. Topologically, residues 190 to 213 are extracellular; sequence RYVPEGNLTSCGIDYLERDWNPRS. Asn-196 carries N-linked (GlcNAc...) asparagine glycosylation. A helical transmembrane segment spans residues 214–241; that stretch reads YLIFYSIFVYYIPLFLICYSYWFIIAAV. The Cytoplasmic segment spans residues 242-276; the sequence is SAHEKAMREQAKKMNVKSLRSSEDAEKSAEGKLAK. The helical transmembrane segment at 277–300 threads the bilayer; it reads VALVTITLWFMAWTPYLVINCMGL. Residues 301–307 lie on the Extracellular side of the membrane; the sequence is FKFEGLT. Residues 308 to 332 form a helical membrane-spanning segment; it reads PLNTIWGACFAKSAACYNPIVYGIS. The residue at position 319 (Lys-319) is an N6-(retinylidene)lysine. Residues 333 to 373 lie on the Cytoplasmic side of the membrane; the sequence is HPKYRLALKEKCPCCVFGKVDDGKSSDAQSQATASEAESKA. The interval 354–373 is disordered; it reads DGKSSDAQSQATASEAESKA. Low complexity predominate over residues 358 to 373; it reads SDAQSQATASEAESKA.

Belongs to the G-protein coupled receptor 1 family. Opsin subfamily. In terms of processing, phosphorylated on some or all of the serine and threonine residues present in the C-terminal region.

It is found in the cell projection. The protein localises to the rhabdomere membrane. Its function is as follows. Visual pigments are the light-absorbing molecules that mediate vision. They consist of an apoprotein, opsin, covalently linked to cis-retinal. The sequence is that of Opsin Rh1 (ninaE) from Drosophila melanogaster (Fruit fly).